The following is a 640-amino-acid chain: Threonine--tRNA ligase (640 aa).

The region spanning 1-61 (MPIITLPNGD…TEDSTLQIIT (61 aa)) is the TGS domain. The catalytic stretch occupies residues 242 to 533 (DHRKIGKALD…LIEHYAGFMP (292 aa)). Residues Cys333, His384, and His510 each contribute to the Zn(2+) site.

This sequence belongs to the class-II aminoacyl-tRNA synthetase family. Homodimer. Requires Zn(2+) as cofactor.

Its subcellular location is the cytoplasm. The catalysed reaction is tRNA(Thr) + L-threonine + ATP = L-threonyl-tRNA(Thr) + AMP + diphosphate + H(+). Its function is as follows. Catalyzes the attachment of threonine to tRNA(Thr) in a two-step reaction: L-threonine is first activated by ATP to form Thr-AMP and then transferred to the acceptor end of tRNA(Thr). Also edits incorrectly charged L-seryl-tRNA(Thr). This Acinetobacter baumannii (strain SDF) protein is Threonine--tRNA ligase.